A 290-amino-acid polypeptide reads, in one-letter code: Pyridoxal kinase PdxY (290 aa).

Substrate is bound by residues serine 12 and threonine 47–glutamine 48. ATP-binding positions include aspartate 114, glutamate 151, lysine 184, and arginine 211–leucine 214. Aspartate 225 is a binding site for substrate.

The protein belongs to the pyridoxine kinase family. PdxY subfamily. As to quaternary structure, homodimer. Mg(2+) serves as cofactor.

It catalyses the reaction pyridoxal + ATP = pyridoxal 5'-phosphate + ADP + H(+). It participates in cofactor metabolism; pyridoxal 5'-phosphate salvage; pyridoxal 5'-phosphate from pyridoxal: step 1/1. Functionally, pyridoxal kinase involved in the salvage pathway of pyridoxal 5'-phosphate (PLP). Catalyzes the phosphorylation of pyridoxal to PLP. This is Pyridoxal kinase PdxY from Pseudomonas putida (strain ATCC 700007 / DSM 6899 / JCM 31910 / BCRC 17059 / LMG 24140 / F1).